Consider the following 316-residue polypeptide: MLP-like protein 34 (316 aa).

Belongs to the MLP family.

This Arabidopsis thaliana (Mouse-ear cress) protein is MLP-like protein 34 (MLP34).